A 496-amino-acid chain; its full sequence is NADH-ubiquinone oxidoreductase 51 kDa subunit, mitochondrial (496 aa).

The transit peptide at 1–30 (MISRAAAPSSSIASLSSRSLRAQAPAARSF) directs the protein to the mitochondrion. 98–107 (GRGGAGFPSG) lines the NAD(+) pocket. An FMN-binding site is contributed by 214-261 (GMGAYVCGEETSLIESIEGKAGKPRLKPPFPAAVGLFGCPSTVTNVET). Residues Cys-393, Cys-396, Cys-399, and Cys-439 each contribute to the [4Fe-4S] cluster site.

It belongs to the complex I 51 kDa subunit family. Complex I is composed of about 40 different subunits. This is a component of the flavoprotein-sulfur (FP) fragment of the enzyme. FMN serves as cofactor. Requires [4Fe-4S] cluster as cofactor.

The protein resides in the mitochondrion inner membrane. The catalysed reaction is a ubiquinone + NADH + 5 H(+)(in) = a ubiquinol + NAD(+) + 4 H(+)(out). Its function is as follows. Core subunit of the mitochondrial membrane respiratory chain NADH dehydrogenase (Complex I) that is believed to belong to the minimal assembly required for catalysis. Complex I functions in the transfer of electrons from NADH to the respiratory chain. The immediate electron acceptor for the enzyme is believed to be ubiquinone. In Aspergillus niger, this protein is NADH-ubiquinone oxidoreductase 51 kDa subunit, mitochondrial (NUO51).